The primary structure comprises 575 residues: Adenine deaminase 1 (575 aa).

This sequence belongs to the metallo-dependent hydrolases superfamily. Adenine deaminase family. Mn(2+) serves as cofactor.

The enzyme catalyses adenine + H2O + H(+) = hypoxanthine + NH4(+). This is Adenine deaminase 1 from Agrobacterium fabrum (strain C58 / ATCC 33970) (Agrobacterium tumefaciens (strain C58)).